Here is a 199-residue protein sequence, read N- to C-terminus: NAD(P)H dehydrogenase (quinone) (199 aa).

The Flavodoxin-like domain maps to 4-190; sequence VLVLYYSSYG…AMARFQGGHV (187 aa). FMN contacts are provided by residues 10–15 and 78–80; these read SSYGHI and TRF. Tyr12 contributes to the NAD(+) binding site. Trp98 is a substrate binding site. Residues 113 to 119 and His134 each bind FMN; that span reads STATQHG.

It belongs to the WrbA family. Requires FMN as cofactor.

It carries out the reaction a quinone + NADH + H(+) = a quinol + NAD(+). The catalysed reaction is a quinone + NADPH + H(+) = a quinol + NADP(+). The polypeptide is NAD(P)H dehydrogenase (quinone) (Azoarcus sp. (strain BH72)).